Consider the following 198-residue polypeptide: Dual specificity protein phosphatase 14 (198 aa).

Positions 26–167 constitute a Tyrosine-protein phosphatase domain; that stretch reads GIAQITSSLF…LIDYESQLFG (142 aa). Catalysis depends on cysteine 111, which acts as the Phosphocysteine intermediate.

This sequence belongs to the protein-tyrosine phosphatase family. Non-receptor class dual specificity subfamily.

It catalyses the reaction O-phospho-L-tyrosyl-[protein] + H2O = L-tyrosyl-[protein] + phosphate. The enzyme catalyses O-phospho-L-seryl-[protein] + H2O = L-seryl-[protein] + phosphate. It carries out the reaction O-phospho-L-threonyl-[protein] + H2O = L-threonyl-[protein] + phosphate. In terms of biological role, involved in the inactivation of MAP kinases. Dephosphorylates ERK, JNK and p38 MAP-kinases. Plays a negative role in TCR signaling by dephosphorylating MAP3K7 adapter TAB1 leading to its inactivation. The sequence is that of Dual specificity protein phosphatase 14 (Dusp14) from Mus musculus (Mouse).